Consider the following 562-residue polypeptide: Dihydroxy-acid dehydratase (562 aa).

D80 lines the Mg(2+) pocket. C121 serves as a coordination point for [2Fe-2S] cluster. D122 and K123 together coordinate Mg(2+). The residue at position 123 (K123) is an N6-carboxylysine. Residue C194 participates in [2Fe-2S] cluster binding. E446 is a binding site for Mg(2+). S472 serves as the catalytic Proton acceptor.

This sequence belongs to the IlvD/Edd family. As to quaternary structure, homodimer. The cofactor is [2Fe-2S] cluster. It depends on Mg(2+) as a cofactor.

It catalyses the reaction (2R)-2,3-dihydroxy-3-methylbutanoate = 3-methyl-2-oxobutanoate + H2O. The catalysed reaction is (2R,3R)-2,3-dihydroxy-3-methylpentanoate = (S)-3-methyl-2-oxopentanoate + H2O. The protein operates within amino-acid biosynthesis; L-isoleucine biosynthesis; L-isoleucine from 2-oxobutanoate: step 3/4. It participates in amino-acid biosynthesis; L-valine biosynthesis; L-valine from pyruvate: step 3/4. Its function is as follows. Functions in the biosynthesis of branched-chain amino acids. Catalyzes the dehydration of (2R,3R)-2,3-dihydroxy-3-methylpentanoate (2,3-dihydroxy-3-methylvalerate) into 2-oxo-3-methylpentanoate (2-oxo-3-methylvalerate) and of (2R)-2,3-dihydroxy-3-methylbutanoate (2,3-dihydroxyisovalerate) into 2-oxo-3-methylbutanoate (2-oxoisovalerate), the penultimate precursor to L-isoleucine and L-valine, respectively. The polypeptide is Dihydroxy-acid dehydratase (Staphylococcus aureus (strain bovine RF122 / ET3-1)).